Here is a 61-residue protein sequence, read N- to C-terminus: uncharacterized protein (61 aa).

This is an uncharacterized protein from Saccharomyces cerevisiae (strain ATCC 204508 / S288c) (Baker's yeast).